A 312-amino-acid chain; its full sequence is Olfactory receptor 5P4 (312 aa).

The Extracellular portion of the chain corresponds to 1-25 (METENDTMVTEFIILGLTDSATLRA). Asn-5 carries N-linked (GlcNAc...) asparagine glycosylation. A helical membrane pass occupies residues 26–46 (ILFVFFLPVYIVTVVGNISII). At 47–54 (LLIRSSPQ) the chain is on the cytoplasmic side. Residues 55–75 (LHTPMYLFLSHLAFVDIGYST) form a helical membrane-spanning segment. Residues 76–99 (SVTPIMLISFLREETTIPLAGCAA) lie on the Extracellular side of the membrane. Residues Cys-97 and Cys-189 are joined by a disulfide bond. The chain crosses the membrane as a helical span at residues 100 to 120 (QLGSDVAFGTTECFLLATMAY). Topologically, residues 121 to 133 (DRYVAICSPLLYS) are cytoplasmic. The chain crosses the membrane as a helical span at residues 134–154 (TQMSPAICCFLLGASYLGGCM). Residues 155–196 (NASSFTGCFVNLNFCGPNKVNHFFCDLFPLVKLSCGHAYIAE) lie on the Extracellular side of the membrane. A helical transmembrane segment spans residues 197–217 (ISPSISSASVLVSTLSTIIVS). Residues 218–237 (YIYILHSILRMRSAEGRNKA) are Cytoplasmic-facing. Residues 238-258 (FSTCTSHLTAVTLFYGTVLFV) form a helical membrane-spanning segment. The Extracellular segment spans residues 259-271 (YVMPKSSYSADQV). The helical transmembrane segment at 272–292 (KVASVVYTVVIPMLNPLIYSL) threads the bilayer. Residues 293-312 (RNKEVKEAMKKLMARTHWFP) are Cytoplasmic-facing.

Belongs to the G-protein coupled receptor 1 family.

The protein localises to the cell membrane. In terms of biological role, potential odorant receptor. The polypeptide is Olfactory receptor 5P4 (Mus musculus (Mouse)).